The primary structure comprises 65 residues: Vespid chemotactic peptide 5h (65 aa).

The signal sequence occupies residues 1-23 (MKYNIVFLFAIIASLACLQLTFA). AXPX repeat units lie at residues 23–26 (AAPA), 27–30 (ASPL), 31–34 (ANPG), 35–38 (ASPD), 39–42 (AAPN), 43–46 (ADPL), and 47–50 (ADPF). A propeptide spanning residues 24–49 (APAASPLANPGASPDAAPNADPLADP) is cleaved from the precursor. L62 is subject to Leucine amide.

It belongs to the MCD family. Crabrolin subfamily. In terms of tissue distribution, expressed by the venom gland.

It is found in the secreted. Its function is as follows. Shows antimicrobial activity against the Gram-negative bacteria E.coli ATCC 25922 (MIC=30 ug/ml), the Gram-positive bacteria S.aureus ATCC 2592 (MIC=5 ug/ml) and the fungus C.albicans ATCC 2002 (MIC=25 ug/ml). Acts as a mast cell degranulating peptide. Its mast cell degranulation activity may be related to the activation of G-protein coupled receptors in mast cells as well as interaction with other proteins located in cell endosomal membranes in the mast cells. Induces the chemotaxis of neutrophils. This chain is Vespid chemotactic peptide 5h, found in Vespa magnifica (Hornet).